A 507-amino-acid chain; its full sequence is MQDWTSECDLLVVGSGGGALTGAYTAAAQGLTTIVLEKTDRFGGTSAYSGASIWLPGTQVQERAGLPDSTENARSYLRALLGDAESERQDAYVETAPAVVALLEQNPNIEFEFRAFPDYYKAEGRMDTGRSINPLDLDPADIGDLAGRCVRNCTKTDRMDHAPGRMIGGRALIAVSAAVQSTARQNFAPESVLTSLIVEDGRVVGGLRSNPRYRQRIKANRGVLMHAGGGFEGNAEMREQAGTPGKAIWSMGPSGPTPATRSPPELAGRRRNSLARSGVVLPRGRAARRRRLHGRVRGGLVVDSPGSVPQRVASVRPVRTSHGCSPDDNGSAVPSFMIFDSREVTDCPPSASRTRPPPSTSKPEPGSVPTLSKNSLPRPDYRPERIAQHCRKVQRCRKLGVDEEFHRGEDPYDAFFCPPNGGANAALTAIENGPFYAARDRLSDLGTKGGLVTDVNGRVLRADGSAIDGLYAAGNTSASVAPFYPGPGVPLGTAMVFSYRAAQDMAK.

9–38 (DLLVVGSGGGALTGAYTAAAQGLTTIVLEK) is an FAD binding site. Residues 299–385 (GLVVDSPGSV…LPRPDYRPER (87 aa)) are disordered.

Belongs to the FAD-dependent oxidoreductase 2 family. 3-oxosteroid dehydrogenase subfamily. It depends on FAD as a cofactor.

The protein resides in the cell membrane. It catalyses the reaction a 3-oxosteroid + A = a 3-oxo-Delta(1)-steroid + AH2. It functions in the pathway lipid metabolism; steroid degradation. Its function is as follows. Catalyzes the elimination of the C-1 and C-2 hydrogen atoms of the A-ring from the polycyclic ring structure of 3-ketosteroids. The protein is 3-oxosteroid 1-dehydrogenase of Rhodococcus opacus (Nocardia opaca).